Reading from the N-terminus, the 99-residue chain is MHGEITTLQDYVLDLEPEATDLYCYEQLCDSSEEEEDTIDGPAGQAKPDTSNYNIVTSCCKCEATLRLCVQSTHIDIRKLEDLLMGTFGIVCPGCSQRA.

Residues 1–41 (MHGEITTLQDYVLDLEPEATDLYCYEQLCDSSEEEEDTIDG) are E7 terminal domain. The short motif at 22–26 (LYCYE) is the LXCXE motif; interaction with host RB1 and TMEM173/STING element. A zinc finger lies at 59-95 (CCKCEATLRLCVQSTHIDIRKLEDLLMGTFGIVCPGC). The Nuclear export signal motif lies at 77–85 (IRKLEDLLM).

It belongs to the papillomaviridae E7 protein family. Homodimer. Homooligomer. Interacts with host RB1; this interaction induces dissociation of RB1-E2F1 complex thereby disrupting RB1 activity. Interacts with host EP300; this interaction represses EP300 transcriptional activity. Interacts with protein E2; this interaction inhibits E7 oncogenic activity. Interacts with host TMEM173/STING; this interaction impairs the ability of TMEM173/STING to sense cytosolic DNA and promote the production of type I interferon (IFN-alpha and IFN-beta). Post-translationally, highly phosphorylated.

The protein resides in the host cytoplasm. The protein localises to the host nucleus. Plays a role in viral genome replication by driving entry of quiescent cells into the cell cycle. Stimulation of progression from G1 to S phase allows the virus to efficiently use the cellular DNA replicating machinery to achieve viral genome replication. E7 protein has both transforming and trans-activating activities. Induces the disassembly of the E2F1 transcription factor from RB1, with subsequent transcriptional activation of E2F1-regulated S-phase genes. Interferes with host histone deacetylation mediated by HDAC1 and HDAC2, leading to transcription activation. Also plays a role in the inhibition of both antiviral and antiproliferative functions of host interferon alpha. Interaction with host TMEM173/STING impairs the ability of TMEM173/STING to sense cytosolic DNA and promote the production of type I interferon (IFN-alpha and IFN-beta). The polypeptide is Protein E7 (Human papillomavirus 35).